The chain runs to 428 residues: Serine hydroxymethyltransferase (428 aa).

A (6S)-5,6,7,8-tetrahydrofolate-binding site is contributed by 120-122; the sequence is GHI. Residue Lys-226 is modified to N6-(pyridoxal phosphate)lysine.

Belongs to the SHMT family. In terms of assembly, homodimer. Pyridoxal 5'-phosphate is required as a cofactor.

Its subcellular location is the cytoplasm. The enzyme catalyses 5,10-methylenetetrahydromethanopterin + glycine + H2O = 5,6,7,8-tetrahydromethanopterin + L-serine. The protein operates within amino-acid biosynthesis; glycine biosynthesis; glycine from L-serine: step 1/1. In terms of biological role, catalyzes the reversible interconversion of serine and glycine with tetrahydromethanopterin (H4MPT) serving as the one-carbon carrier. Also exhibits a pteridine-independent aldolase activity toward beta-hydroxyamino acids, producing glycine and aldehydes, via a retro-aldol mechanism. In Methanopyrus kandleri (strain AV19 / DSM 6324 / JCM 9639 / NBRC 100938), this protein is Serine hydroxymethyltransferase.